Consider the following 319-residue polypeptide: Chromoplast-specific carotenoid-associated protein C2, chromoplastic (319 aa).

The N-terminal 55 residues, 1–55, are a transit peptide targeting the chromoplast; sequence MTSIAFCNAFTVNPFLAAARRSPPPLTPLTSVALSPARKPRILAIFHPRTFPSFR.

Belongs to the PAP/fibrillin family.

The protein localises to the plastid. The protein resides in the chromoplast. May be involved in carotenoid sequestration within chromoplasts. This Oncidium hybrid cultivar (Orchid) protein is Chromoplast-specific carotenoid-associated protein C2, chromoplastic (CHRC2).